A 356-amino-acid polypeptide reads, in one-letter code: Viral cathepsin (356 aa).

The signal sequence occupies residues 1 to 40; the sequence is MYANALVCLNPSFIKLQFHIVCTMNIIGIVTLALCSAASA. A propeptide spans 41-144 (activation peptide); the sequence is ADEGAAYNLQ…IILNQPPDKG (104 aa). Disulfide bonds link C165–C206, C199–C239, and C295–C343. C168 is a catalytic residue. Residues H302 and N322 contribute to the active site.

The protein belongs to the peptidase C1 family. Post-translationally, synthesized as an inactive proenzyme and activated by proteolytic removal of the inhibitory propeptide.

The enzyme catalyses Endopeptidase of broad specificity, hydrolyzing substrates of both cathepsin L and cathepsin B.. In terms of biological role, cysteine protease that plays an essential role in host liquefaction to facilitate horizontal transmission of the virus. May participate in the degradation of foreign protein expressed by the baculovirus system. The sequence is that of Viral cathepsin (VCATH) from Lepidoptera (butterflies and moths).